The following is a 275-amino-acid chain: Exosome complex component Rrp42 (275 aa).

It belongs to the RNase PH family. Rrp42 subfamily. Component of the archaeal exosome complex. Forms a hexameric ring-like arrangement composed of 3 Rrp41-Rrp42 heterodimers. The hexameric ring associates with a trimer of Rrp4 and/or Csl4 subunits.

The protein localises to the cytoplasm. Its function is as follows. Non-catalytic component of the exosome, which is a complex involved in RNA degradation. Contributes to the structuring of the Rrp41 active site. The polypeptide is Exosome complex component Rrp42 (Saccharolobus solfataricus (strain ATCC 35092 / DSM 1617 / JCM 11322 / P2) (Sulfolobus solfataricus)).